The primary structure comprises 332 residues: Iron-utilization periplasmic protein (332 aa).

Residues 1–23 (MQFKHFKLATLAAALAFSANSFA) form the signal peptide. H32, E80, Y218, and Y219 together coordinate Fe cation.

This sequence belongs to the bacterial solute-binding protein 1 family. As to quaternary structure, the complex is composed of two ATP-binding proteins (FbpC), two transmembrane proteins (FbpB) and a solute-binding protein (FbpA).

It localises to the periplasm. Part of the ABC transporter complex FbpABC (TC 3.A.1.10.1) involved in Fe(3+) ions import. This protein specifically binds Fe(3+) and is involved in its transmembrane transport. In Haemophilus influenzae (strain ATCC 51907 / DSM 11121 / KW20 / Rd), this protein is Iron-utilization periplasmic protein (fbpA).